Here is an 87-residue protein sequence, read N- to C-terminus: DNA-directed RNA polymerase subunit omega (87 aa).

This sequence belongs to the RNA polymerase subunit omega family. In terms of assembly, the RNAP catalytic core consists of 2 alpha, 1 beta, 1 beta' and 1 omega subunit. When a sigma factor is associated with the core the holoenzyme is formed, which can initiate transcription.

The enzyme catalyses RNA(n) + a ribonucleoside 5'-triphosphate = RNA(n+1) + diphosphate. Promotes RNA polymerase assembly. Latches the N- and C-terminal regions of the beta' subunit thereby facilitating its interaction with the beta and alpha subunits. The protein is DNA-directed RNA polymerase subunit omega of Pseudomonas putida (strain W619).